We begin with the raw amino-acid sequence, 235 residues long: MSDRMKLKGLLAFCLLFLSSFVLAEVNQKEFSVQNSPHLPSRDTIYFEDGRDYFSYKEPIEQASRTDKKIRIQFFFDYDCRVCSSAQDILELYSQIRTYKVALEQYPIATADNQFSARIFYTLQALSAGELSNVLLFETSEKSRYTELSTSNKIQQWAEEQGLDKQLFIQTENSQSVKEQIQNAIELTEEYGVFTYPYVVIGGKYVLTASTLYNDDYSVAVLDFLVNKIEQEQKQ.

A signal peptide spans 1–24; sequence MSDRMKLKGLLAFCLLFLSSFVLA.

This is an uncharacterized protein from Haemophilus influenzae (strain ATCC 51907 / DSM 11121 / KW20 / Rd).